The chain runs to 325 residues: Ribosomal RNA small subunit methyltransferase H (325 aa).

S-adenosyl-L-methionine is bound by residues 39 to 41 (GGH), D59, F90, D108, and Q115.

It belongs to the methyltransferase superfamily. RsmH family.

Its subcellular location is the cytoplasm. It carries out the reaction cytidine(1402) in 16S rRNA + S-adenosyl-L-methionine = N(4)-methylcytidine(1402) in 16S rRNA + S-adenosyl-L-homocysteine + H(+). In terms of biological role, specifically methylates the N4 position of cytidine in position 1402 (C1402) of 16S rRNA. The chain is Ribosomal RNA small subunit methyltransferase H from Leptothrix cholodnii (strain ATCC 51168 / LMG 8142 / SP-6) (Leptothrix discophora (strain SP-6)).